Consider the following 654-residue polypeptide: Acetyl-coenzyme A synthetase (654 aa).

Residues 196-199 (RGGK) and threonine 316 each bind CoA. ATP is bound by residues 392-394 (GEP), 416-421 (DTWWQT), aspartate 506, and arginine 521. Position 529 (serine 529) interacts with CoA. Arginine 532 lines the ATP pocket. Mg(2+) contacts are provided by valine 543 and valine 548. The residue at position 618 (lysine 618) is an N6-acetyllysine.

Belongs to the ATP-dependent AMP-binding enzyme family. Mg(2+) serves as cofactor. Post-translationally, acetylated. Deacetylation by the SIR2-homolog deacetylase activates the enzyme.

It carries out the reaction acetate + ATP + CoA = acetyl-CoA + AMP + diphosphate. In terms of biological role, catalyzes the conversion of acetate into acetyl-CoA (AcCoA), an essential intermediate at the junction of anabolic and catabolic pathways. AcsA undergoes a two-step reaction. In the first half reaction, AcsA combines acetate with ATP to form acetyl-adenylate (AcAMP) intermediate. In the second half reaction, it can then transfer the acetyl group from AcAMP to the sulfhydryl group of CoA, forming the product AcCoA. This is Acetyl-coenzyme A synthetase from Methylobacillus flagellatus (strain ATCC 51484 / DSM 6875 / VKM B-1610 / KT).